A 157-amino-acid polypeptide reads, in one-letter code: Stalk-specific protein A (157 aa).

Positions 1–19 are cleaved as a signal peptide; that stretch reads MRSILILLSLLLTIAFASA.

It is found in the secreted. The polypeptide is Stalk-specific protein A (staA) (Dictyostelium discoideum (Social amoeba)).